Here is a 712-residue protein sequence, read N- to C-terminus: MEVVDIDARAAKLGIDWSQVNFDSIQLPPGEDFGIESDDEAVYQDDQSEFDTGFGNIIVVDHLPVVPKEKFEKLEGVVKKIYNQLGVIKENGLWMPVDPDTKMTLGYCFIEFNTPQEAQNAKEKSHGYKLDKSHIFAVNMFDDFDRLMNVKEEWEPPQARPYVPGENLQKWLTDEKARDQLVIRSGPDTEVFWNDTRQKAPEPVHKRPYWTESYVQWSPLGTYLVTLHKQGAAVWGGADTFTRLMRYQHSMVKLVDFSPGEKYLVTYHSQEPSNPRDASKVEIKVFDVRTGRMMRDFKGSADEFSIGGPGGVAGASWPVFRWAGGKDDKYFAKLSKNTISVYETETFSLIDKKSMKVDNVVDICWSPTDSILSLFVPEQGGGNQPAKVALVQIPSKVELRQKNLFSVSDCKMYWQSSGEYLAVKVDRYTKTKKSTYSGFELFRIKERDIPIEVLELDNKNDKIIAFAWEPKGHRFAVIHGDQPRPDVSFYSMKTAQNTGRVSKLATLKAKQANALFWSPTGKYIILAGLKGFNGQLEFFNVDELETMATAEHFMATDIEWDPTGRYVATAVTSVHEMENGFTIWSFNGIMLYRILKDHFFQLAWRPRPPSFLTAEKEEEIAKTLKKYSKKYEAEDQDVSLLLSEQDREKRKALKEEWEKWVMQWKSLHEEEKLVRQNLRDGEVSDVEEDEYEAKEVEFEDLIDVTEEIVQES.

An N-acetylmethionine modification is found at M1. In terms of domain architecture, RRM spans 56 to 143 (NIIVVDHLPV…HIFAVNMFDD (88 aa)).

Belongs to the eIF-3 subunit B family. In terms of assembly, component of the eukaryotic translation initiation factor 3 (eIF-3) complex, which is composed of at least 13 different subunits. Binds to the translation initiation factor TIF3H1.

The protein localises to the cytoplasm. RNA-binding component of the eukaryotic translation initiation factor 3 (eIF-3) complex, which is involved in protein synthesis of a specialized repertoire of mRNAs and, together with other initiation factors, stimulates binding of mRNA and methionyl-tRNAi to the 40S ribosome. The eIF-3 complex specifically targets and initiates translation of a subset of mRNAs involved in cell proliferation. In Arabidopsis thaliana (Mouse-ear cress), this protein is Eukaryotic translation initiation factor 3 subunit B (TIF3B1).